We begin with the raw amino-acid sequence, 3037 residues long: Genome polyprotein (3037 aa).

Ser2 is modified (N-acetylserine; by host). The segment at 2–23 (STNPKPQRKTKRNTNRRPQDVK) is interaction with STAT1. The segment at 2–58 (STNPKPQRKTKRNTNRRPQDVKFPGGGQIVGGVYLLPRRGPRLGVRAARKTSERSQP) is interaction with EIF2AK2/PKR. The interaction with DDX3X stretch occupies residues 2–59 (STNPKPQRKTKRNTNRRPQDVKFPGGGQIVGGVYLLPRRGPRLGVRAARKTSERSQPR). A disordered region spans residues 2–75 (STNPKPQRKT…PKDRRSTGKS (74 aa)). Residues 2-168 (STNPKPQRKT…EDGINYATGN (167 aa)) are Cytoplasmic-facing. Short sequence motifs (nuclear localization signal) lie at residues 5–13 (PKPQRKTKR) and 38–43 (PRRGPR). A compositionally biased stretch (basic residues) spans 7–16 (PQRKTKRNTN). Over residues 32–47 (GGVYLLPRRGPRLGVR) the composition is skewed to low complexity. Position 53 is a phosphoserine; by host (Ser53). Short sequence motifs (nuclear localization signal) lie at residues 58-64 (PRGRRQP) and 66-71 (PKDRRS). Ser99 and Ser116 each carry phosphoserine; by host. The interval 112-152 (PRHKSRNLGKVIDTLTCGFADLMGYIPVVGAPVGGVARALA) is important for endoplasmic reticulum and mitochondrial localization. The tract at residues 122-173 (VIDTLTCGFADLMGYIPVVGAPVGGVARALAHGVRVLEDGINYATGNLPGCS) is interaction with APOA2. An important for lipid droplets localization region spans residues 164–167 (YATG). The chain crosses the membrane as a helical span at residues 169-189 (LPGCSFSIFLLALLSCISVPV). A propeptide spans 178–191 (LLALLSCISVPVSA) (ER anchor for the core protein, removed in mature form by host signal peptidase). The Lumenal segment spans residues 190-358 (SAVEVRNTSS…TGGHWGVMFG (169 aa)). Asn196, Asn209, and Asn234 each carry an N-linked (GlcNAc...) asparagine; by host glycan. An important for fusion region spans residues 265 to 296 (IVMSATLCSALYVGDVCGALMIAAQVVVVSPQ). Asn305 carries an N-linked (GlcNAc...) asparagine; by host glycan. A helical transmembrane segment spans residues 359–379 (LAYFSMQGAWAKVVVILLLTA). Over 380 to 729 (GVEASTYTTG…WEWVVLLFLL (350 aa)) the chain is Lumenal. Positions 385-412 (TYTTGAVVGRSTHLFTSMFSLGSQQRVQ) are HVR1. Asn417, Asn423, and Asn430 each carry an N-linked (GlcNAc...) (high mannose) asparagine; by host glycan. 4 disulfide bridges follow: Cys429–Cys554, Cys452–Cys459, Cys488–Cys496, and Cys505–Cys510. N-linked (GlcNAc...) asparagine; by host glycosylation occurs at Asn448. Positions 475–480 (EESVTN) are HVR2. Positions 482–495 (ADMRPYCWHYPPRP) are CD81-binding 1. Asn534 is a glycosylation site (N-linked (GlcNAc...) asparagine; by host). Residues 546–553 (PPKGAWFG) form a CD81-binding 2 region. N-linked (GlcNAc...) asparagine; by host glycosylation occurs at Asn558. Intrachain disulfides connect Cys566-Cys571, Cys585-Cys589, Cys601-Cys624, and Cys611-Cys648. 2 N-linked (GlcNAc...) (high mannose) asparagine; by host glycosylation sites follow: Asn627 and Asn649. A disulfide bond links Cys656 and Cys681. Residues 664 to 675 (SQLSPLLHSTTE) are PKR/eIF2-alpha phosphorylation homology domain (PePHD). The chain crosses the membrane as a helical span at residues 730 to 750 (LADARVCACLWMLLLLGQAEA). At 751-761 (ALEKLVILHAA) the chain is on the lumenal side. A helical transmembrane segment spans residues 762-782 (SAASSNGLLYFILFFVAAWCI). The Cytoplasmic portion of the chain corresponds to 783-786 (KGRA). A helical transmembrane segment spans residues 787-807 (VPMVTYTLLGCWSFVLLLMAL). Over 808–817 (PHQAYALDAA) the chain is Lumenal. A helical membrane pass occupies residues 818–838 (EQGQIGMALLIAITAFTITPA). The Cytoplasmic segment spans residues 839 to 885 (YKILLSRCLWWTCYMLVLAEALIQDWIPPLQARGGRDGVIWAMTMFY). A helical transmembrane segment spans residues 886-906 (PGVVFDITKWLLAILGPGYLF). The Peptidase C18 domain occupies 905 to 1030 (LFRAAVMRTP…GYTSKGWRLL (126 aa)). Residues 907–932 (RAAVMRTPYFVRANALLRMCALVKQL) lie on the Lumenal side of the membrane. Positions 908–1210 (AAVMRTPYFV…PVESLDVVTR (303 aa)) are protease NS2-3. A lipid anchor (S-palmitoyl cysteine; by host) is attached at Cys926. A helical transmembrane segment spans residues 933 to 953 (AGGKYVQVALITLGKWTGTYI). The tract at residues 933–953 (AGGKYVQVALITLGKWTGTYI) is interaction with host SCPS1. Residues 954-1661 (YDHLSPMSDW…CMQADLEIMT (708 aa)) lie on the Cytoplasmic side of the membrane. Active-site for protease NS2 activity; shared with dimeric partner residues include His956, Glu976, and Cys997. A Peptidase S29 domain is found at 1031 to 1212 (APITAYAQQT…ESLDVVTRSP (182 aa)). Residues His1087 and Asp1111 each act as charge relay system; for serine protease NS3 activity in the active site. The Zn(2+) site is built by Cys1127 and Cys1129. Ser1169 (charge relay system; for serine protease NS3 activity) is an active-site residue. The Zn(2+) site is built by Cys1175 and His1179. In terms of domain architecture, Helicase ATP-binding spans 1221-1373 (PAVPQTYQVG…PNIEEVALGH (153 aa)). ATP is bound at residue 1234 to 1241 (APTGSGKS). Residues Ser1241 and Glu1321 each contribute to the Mg(2+) site. Positions 1320–1323 (DECH) match the DECH box motif. The segment at 1490–1502 (QRRGRTGRGRLGI) is RNA-binding. The helical transmembrane segment at 1662 to 1682 (STWVLAGGVLAAVAAYCLATG) threads the bilayer. The tract at residues 1683-1694 (CVSIIGRIHVNQ) is NS3-binding. The Cytoplasmic segment spans residues 1683–1809 (CVSIIGRIHV…ALTSPLSTST (127 aa)). The chain crosses the membrane as a helical span at residues 1810–1830 (TILLNIMGGWLASQIAPPAGA). Residues 1831 to 1832 (TG) are Lumenal-facing. The helical transmembrane segment at 1833-1853 (FVVSGLVGAAVGSIGLGKILV) threads the bilayer. Residue Asp1854 is a topological domain, cytoplasmic. A helical transmembrane segment spans residues 1855 to 1875 (VLAGYGAGISGALVAFKIMSG). Residues 1876 to 1885 (EKPSVEDVVN) are Lumenal-facing. Residues 1886–1906 (LLPAILSPGALVVGVICAAIL) form a helical membrane-spanning segment. Topologically, residues 1907 to 1976 (RRHVGQGEGA…WITEDCPVPC (70 aa)) are cytoplasmic. Cys1976 is lipidated: S-palmitoyl cysteine; by host. The stretch at 1977-2006 (SGSWLRDVWDWVCSILIDFKNWLSAKLFPR) is an intramembrane region. Residues 2007–3016 (LPGIPFISCQ…YHSVSRARPR (1010 aa)) lie on the Cytoplasmic side of the membrane. Cys2015, Cys2033, Cys2035, and Cys2056 together coordinate Zn(2+). The segment at 2124-2212 (EFFSWVDGVQ…ASSSASQLSA (89 aa)) is FKBP8-binding. The segment at 2124–2336 (EFFSWVDGVQ…PVPPPRRRRA (213 aa)) is transcriptional activation. The interaction with non-structural protein 4A stretch occupies residues 2139-2143 (PTPKA). Positions 2193–2464 (RLARGSPPSA…ALITPCSPEE (272 aa)) are interaction with host SKP2. Phosphoserine; by host occurs at positions 2198, 2201, 2205, 2208, 2211, and 2214. Residues 2214-2253 (SLRATCTTHAKCPDIDMVDANLFCWCTMGGNMTRIESESK) form an ISDR region. The interval 2214-2279 (SLRATCTTHA…REPSIPSEYL (66 aa)) is interaction with EIF2AK2/PKR. Positions 2253–2310 (KVLMVDSFDPVVDKEDEREPSIPSEYLLPKSRFPPALPPWARPDYNPPLLETWKRPDY) are NS4B-binding. The tract at residues 2303–2381 (ETWKRPDYQP…GTTGETSKSP (79 aa)) is V3. An SH3-binding motif is present at residues 2326–2329 (TPVP). The Nuclear localization signal signature appears at 2331–2339 (PRRRRAVVL). Residue Lys2354 forms a Glycyl lysine isopeptide (Lys-Gly) (interchain with G-Cter in ubiquitin) linkage. A disordered region spans residues 2354–2434 (KSFGCPPPSG…APGSDSGSWS (81 aa)). The segment covering 2402–2411 (EPGDPDLEPE) has biased composition (acidic residues). Phosphoserine; by host occurs at positions 2475 and 2488. Residues 2660–2778 (PMGFSYDTRC…ISESQGVEED (119 aa)) enclose the RdRp catalytic domain. Positions 2666, 2764, and 2765 each coordinate Mg(2+). Residues 3017 to 3037 (LLLLGLLLLCVGVGIFLLPAR) traverse the membrane as a helical segment.

The protein belongs to the hepacivirus polyprotein family. In terms of assembly, homooligomer. Interacts with E1 (via C-terminus). Interacts with the non-structural protein 5A. Interacts (via N-terminus) with host STAT1 (via SH2 domain); this interaction results in decreased STAT1 phosphorylation and ubiquitin-mediated proteasome-dependent STAT1 degradation, leading to decreased IFN-stimulated gene transcription. Interacts with host STAT3; this interaction constitutively activates STAT3. Interacts with host LTBR receptor. Interacts with host TNFRSF1A receptor and possibly induces apoptosis. Interacts with host HNRPK. Interacts with host YWHAE. Interacts with host UBE3A/E6AP. Interacts with host DDX3X. Interacts with host APOA2. Interacts with host RXRA protein. Interacts with host SP110 isoform 3/Sp110b; this interaction sequesters the transcriptional corepressor SP110 away from the nucleus. Interacts with host CREB3 nuclear transcription protein; this interaction triggers cell transformation. Interacts with host ACY3. Interacts with host C1QR1. Interacts with host RBM24; this interaction, which enhances the interaction of the mature core protein with 5'-UTR, may inhibit viral translation and favor replication. Interacts with host EIF2AK2/PKR; this interaction induces the autophosphorylation of EIF2AK2. Part of the viral assembly initiation complex composed of NS2, E1, E2, NS3, NS4A, NS5A and the mature core protein. As to quaternary structure, forms a heterodimer with envelope glycoprotein E2. Interacts with mature core protein. Interacts with protease NS2. The heterodimer E1/E2 interacts with host CLDN1; this interaction plays a role in viral entry into host cell. Interacts with host SPSB2 (via C-terminus). Part of the viral assembly initiation complex composed of NS2, E1, E2, NS3, NS4A, NS5A and the mature core protein. Interacts with host NEURL3; this interaction prevents E1 binding to glycoprotein E2. Forms a heterodimer with envelope glycoprotein E1. Interacts with host CD81 and SCARB1 receptors; these interactions play a role in viral entry into host cell. Interacts with host EIF2AK2/PKR; this interaction inhibits EIF2AK2 and probably allows the virus to evade the innate immune response. Interacts with host CD209/DC-SIGN and CLEC4M/DC-SIGNR. Interact with host SPCS1; this interaction is essential for viral particle assembly. Interacts with protease NS2. The heterodimer E1/E2 interacts with host CLDN1; this interaction plays a role in viral entry into host cell. Part of the viral assembly initiation complex composed of NS2, E1, E2, NS3, NS4A, NS5A and the mature core protein. Interacts with host SLC3A2/4F2hc; the interaction may facilitate viral entry into host cell. Interacts with human PLSCR1. In terms of assembly, homohexamer. Homoheptamer. Interacts with protease NS2. As to quaternary structure, homodimer. Interacts with host SPCS1; this interaction is essential for viral particle assembly. Interacts with envelope glycoprotein E1. Interacts with envelope glycoprotein E2. Interacts with viroporin p7. Interacts with serine protease/helicase NS3. Part of the replication complex composed of NS2, NS3, NS4A, NS4B, NS5A and the RNA-directed RNA polymerase embedded in an ER-derived membranous web. Part of the viral assembly initiation complex composed of NS2, E1, E2, NS3, NS4A, NS5A and the mature core protein. Interacts with protease NS2. Interacts with non-structural protein 4A; this interaction stabilizes the folding of NS3 serine protease. NS3-NS4A interaction is essential for NS3 activation and allows membrane anchorage of the latter. NS3/NS4A complex also prevents phosphorylation of host IRF3, thus preventing the establishment of dsRNA induced antiviral state. Interacts with host MAVS; this interaction leads to the cleavage and inhibition of host MAVS. Interacts with host TICAM1; this interaction leads to the cleavage and inhibition of host TICAM1. Interacts with host TANK-binding kinase/TBK1; this interaction results in the inhibition of the association between TBK1 and IRF3, which leads to the inhibition of IRF3 activation. Interacts with host RBM24. Part of the replication complex composed of NS2, NS3, NS4A, NS4B, NS5A and the RNA-directed RNA polymerase embedded in an ER-derived membranous web. Part of the viral assembly initiation complex composed of NS2, E1, E2, NS3, NS4A, NS5A and the mature core protein. In terms of assembly, interacts with NS3 serine protease; this interaction stabilizes the folding of NS3 serine protease. NS3-NS4A interaction is essential for NS3 activation and allows membrane anchorage of the latter. Interacts with non-structural protein 5A (via N-terminus). Part of the replication complex composed of NS2, NS3, NS4A, NS4B, NS5A and the RNA-directed RNA polymerase embedded in an ER-derived membranous web. Part of the viral assembly initiation complex composed of NS2, E1, E2, NS3, NS4A, NS5A and the mature core protein. As to quaternary structure, homomultimer. Interacts with non-structural protein NS5A. Interacts with host PLA2G4C; this interaction likely initiates the recruitment of replication complexes to lipid droplets. Interacts with host STING; this interaction disrupts the interaction between STING and TBK1 thereby suppressing the interferon signaling. Part of the replication complex composed of NS2, NS3, NS4A, NS4B, NS5A and the RNA-directed RNA polymerase embedded in an ER-derived membranous web. Monomer. Homodimer; dimerization is required for RNA-binding. Interacts with the mature core protein. Interacts (via N-terminus) with non-structural protein 4A. Interacts with non-structural protein 4B. Interacts (via region D2) with RNA-directed RNA polymerase. Part of the viral assembly initiation complex composed of NS2, E1, E2, NS3, NS4A, NS5A and the mature core protein. Part of the replication complex composed of NS2, NS3, NS4A, NS4B, NS5A and the RNA-directed RNA polymerase embedded in an ER-derived membranous web. Interacts with host GRB2. Interacts with host BIN1. Interacts with host PIK3R1. Interacts with host SRCAP. Interacts with host FKBP8. Interacts (via C-terminus) with host VAPB (via MSP domain). Interacts with host EIF2AK2/PKR; this interaction leads to disruption of EIF2AK2 dimerization by NS5A and probably allows the virus to evade the innate immune response. Interacts (via N-terminus) with host PACSIN2 (via N-terminus); this interaction attenuates protein kinase C alpha-mediated phosphorylation of PACSIN2 by disrupting the interaction between PACSIN2 and PRKCA. Interacts (via N-terminus) with host SRC kinase (via SH2 domain). Interacts with most Src-family kinases. Interacts with host IFI27 and SKP2; promotes the ubiquitin-mediated proteasomal degradation of NS5A. Interacts with host GPS2. Interacts with host TNFRSF21; this interaction allows the modulation by the virus of JNK, p38 MAPK, STAT3, and Akt signaling pathways in a DR6-dependent manner. Interacts (via N-terminus) with host CIDEB (via N-terminus); this interaction seems to regulate the association of HCV particles with APOE. Interacts with host CHKA/Choline Kinase-alpha; CHKA bridges host PI4KA and NS5A and potentiates NS5A-stimulated PI4KA activity, which then facilitates the targeting of the ternary complex to the ER for viral replication. Interacts with host SPSB2 (via C-terminus); this interaction targets NS5A for ubiquitination and degradation. Interacts with host RAB18; this interaction may promote the association of NS5A and other replicase components with lipid droplets. Interacts (via region D2) with host PPIA/CYPA; the interaction stimulates RNA-binding ability of NS5A and is dependent on the peptidyl-prolyl cis-trans isomerase activity of PPIA/CYPA. Interacts with host TRIM14; this interaction induces the degradation of NS5A. In terms of assembly, homooligomer. Interacts with non-structural protein 5A. Interacts with host VAPB. Interacts with host PRK2/PKN2. Interacts with host HNRNPA1 and SEPT6; these interactions facilitate viral replication. Part of the replication complex composed of NS2, NS3, NS4A, NS4B, NS5A and the RNA-directed RNA polymerase. Requires Zn(2+) as cofactor. It depends on Mg(2+) as a cofactor. Post-translationally, specific enzymatic cleavages in vivo yield mature proteins. The structural proteins, core, E1, E2 and p7 are produced by proteolytic processing by host signal peptidases. The core protein precursor is synthesized as a 23 kDa, which is retained in the ER membrane through the hydrophobic signal peptide. Cleavage by the signal peptidase releases the 21 kDa mature core protein. The cleavage of the core protein precursor occurs between aminoacids 176 and 188 but the exact cleavage site is not known. Some degraded forms of the core protein appear as well during the course of infection. The other proteins (p7, NS2, NS3, NS4A, NS4B, NS5A and NS5B) are cleaved by the viral proteases. Autoprocessing between NS2 and NS3 is mediated by the NS2 cysteine protease catalytic domain and regulated by the NS3 N-terminal domain. Phosphorylated by host PKC and PKA. In terms of processing, ubiquitinated; mediated by UBE3A and leading to core protein subsequent proteasomal degradation. Post-translationally, highly N-glycosylated. Palmitoylation is required for NS2/3 autoprocessing and E2 recruitment to membranes. In terms of processing, palmitoylated. This modification may play a role in its polymerization or in protein-protein interactions. Post-translationally, phosphorylated on serines in a basal form termed p56. p58 is a hyperphosphorylated form of p56. p56 and p58 coexist in the cell in roughly equivalent amounts. Hyperphosphorylation is dependent on the presence of NS4A. Host CSNK1A1/CKI-alpha or RPS6KB1 kinases may be responsible for NS5A phosphorylation. Tyrosine phosphorylation is essential for the interaction with host SRC. In terms of processing, the N-terminus is phosphorylated by host PRK2/PKN2.

It localises to the host endoplasmic reticulum membrane. The protein localises to the host mitochondrion membrane. The protein resides in the virion. Its subcellular location is the host cytoplasm. It is found in the host nucleus. It localises to the host lipid droplet. The protein localises to the virion membrane. The protein resides in the host mitochondrion. Its subcellular location is the host cell membrane. It is found in the host perinuclear region. It catalyses the reaction Hydrolysis of four peptide bonds in the viral precursor polyprotein, commonly with Asp or Glu in the P6 position, Cys or Thr in P1 and Ser or Ala in P1'.. The enzyme catalyses a ribonucleoside 5'-triphosphate + H2O = a ribonucleoside 5'-diphosphate + phosphate + H(+). The catalysed reaction is ATP + H2O = ADP + phosphate + H(+). It carries out the reaction RNA(n) + a ribonucleoside 5'-triphosphate = RNA(n+1) + diphosphate. Inhibited by the antiviral drug hexamethylene amiloride. Inhibition by amantadine appears to be genotype-dependent. Also inhibited by long-alkyl-chain iminosugar derivatives. Its activity is regulated as follows. Activity is up-regulated by PRK2/PKN2-mediated phosphorylation. Functionally, packages viral RNA to form a viral nucleocapsid, and promotes virion budding. Participates in the viral particle production as a result of its interaction with the non-structural protein 5A. Binds RNA and may function as a RNA chaperone to induce the RNA structural rearrangements taking place during virus replication. Modulates viral translation initiation by interacting with viral IRES and 40S ribosomal subunit. Affects various cell signaling pathways, host immunity and lipid metabolism. Prevents the establishment of cellular antiviral state by blocking the interferon-alpha/beta (IFN-alpha/beta) and IFN-gamma signaling pathways and by blocking the formation of phosphorylated STAT1 and promoting ubiquitin-mediated proteasome-dependent degradation of STAT1. Activates STAT3 leading to cellular transformation. Regulates the activity of cellular genes, including c-myc and c-fos. May repress the promoter of p53, and sequester CREB3 and SP110 isoform 3/Sp110b in the cytoplasm. Represses cell cycle negative regulating factor CDKN1A, thereby interrupting an important check point of normal cell cycle regulation. Targets transcription factors involved in the regulation of inflammatory responses and in the immune response: suppresses TNF-induced NF-kappa-B activation, and activates AP-1. Binds to dendritic cells (DCs) via C1QR1, resulting in down-regulation of T-lymphocytes proliferation. Alters lipid metabolism by interacting with hepatocellular proteins involved in lipid accumulation and storage. Induces up-regulation of FAS promoter activity, and thereby contributes to the increased triglyceride accumulation in hepatocytes (steatosis). In terms of biological role, forms a heterodimer with envelope glycoprotein E2, which mediates virus attachment to the host cell, virion internalization through clathrin-dependent endocytosis and fusion with host membrane. Fusion with the host cell is most likely mediated by both E1 and E2, through conformational rearrangements of the heterodimer required for fusion rather than a classical class II fusion mechanism. E1/E2 heterodimer binds host apolipoproteins such as APOB and ApoE thereby forming a lipo-viro-particle (LVP). APOE associated to the LVP allows the initial virus attachment to cell surface receptors such as the heparan sulfate proteoglycans (HSPGs), syndecan-1 (SDC1), syndecan-1 (SDC2), the low-density lipoprotein receptor (LDLR) and scavenger receptor class B type I (SCARB1). The cholesterol transfer activity of SCARB1 allows E2 exposure and binding of E2 to SCARB1 and the tetraspanin CD81. E1/E2 heterodimer binding on CD81 activates the epithelial growth factor receptor (EGFR) signaling pathway. Diffusion of the complex E1-E2-EGFR-SCARB1-CD81 to the cell lateral membrane allows further interaction with Claudin 1 (CLDN1) and occludin (OCLN) to finally trigger HCV entry. Its function is as follows. Forms a heterodimer with envelope glycoprotein E1, which mediates virus attachment to the host cell, virion internalization through clathrin-dependent endocytosis and fusion with host membrane. Fusion with the host cell is most likely mediated by both E1 and E2, through conformational rearrangements of the heterodimer required for fusion rather than a classical class II fusion mechanism. The interaction between envelope glycoprotein E2 and host apolipoprotein E/APOE allows the proper assembly, maturation and infectivity of the viral particles. This interaction is probably promoted via the up-regulation of cellular autophagy by the virus. E1/E2 heterodimer binds host apolipoproteins such as APOB and APOE thereby forming a lipo-viro-particle (LVP). APOE associated to the LVP allows the initial virus attachment to cell surface receptors such as the heparan sulfate proteoglycans (HSPGs), syndecan-1 (SDC1), syndecan-1 (SDC2), the low-density lipoprotein receptor (LDLR) and scavenger receptor class B type I (SCARB1). The cholesterol transfer activity of SCARB1 allows E2 exposure and binding of E2 to SCARB1 and the tetraspanin CD81. E1/E2 heterodimer binding on CD81 activates the epithelial growth factor receptor (EGFR) signaling pathway. Diffusion of the complex E1-E2-EGFR-SCARB1-CD81 to the cell lateral membrane allows further interaction with Claudin 1 (CLDN1) and occludin (OCLN) to finally trigger HCV entry. Inhibits host EIF2AK2/PKR activation, preventing the establishment of an antiviral state. Viral ligand for CD209/DC-SIGN and CLEC4M/DC-SIGNR, which are respectively found on dendritic cells (DCs), and on liver sinusoidal endothelial cells and macrophage-like cells of lymph node sinuses. These interactions allow the capture of circulating HCV particles by these cells and subsequent facilitated transmission to permissive cells such as hepatocytes and lymphocyte subpopulations. The interaction between E2 and host amino acid transporter complex formed by SLC3A2 and SLC7A5/LAT1 may facilitate viral entry into host cell. Ion channel protein that acts as a viroporin and plays an essential role in the assembly, envelopment and secretion of viral particles. Regulates the host cell secretory pathway, which induces the intracellular retention of viral glycoproteins and favors assembly of viral particles. Creates a pore in acidic organelles and releases Ca(2+) and H(+) in the cytoplasm of infected cells, leading to a productive viral infection. High levels of cytoplasmic Ca(2+) may trigger membrane trafficking and transport of viral ER-associated proteins to viroplasms, sites of viral genome replication. This ionic imbalance induces the assembly of the inflammasome complex, which triggers the maturation of pro-IL-1beta into IL-1beta through the action of caspase-1. Targets also host mitochondria and induces mitochondrial depolarization. In addition of its role as a viroporin, acts as a lipid raft adhesion factor. Functionally, cysteine protease required for the proteolytic auto-cleavage between the non-structural proteins NS2 and NS3. The N-terminus of NS3 is required for the function of NS2 protease (active region NS2-3). Promotes the initiation of viral particle assembly by mediating the interaction between structural and non-structural proteins. In terms of biological role, displays three enzymatic activities: serine protease with a chymotrypsin-like fold, NTPase and RNA helicase. NS3 serine protease, in association with NS4A, is responsible for the cleavages of NS3-NS4A, NS4A-NS4B, NS4B-NS5A and NS5A-NS5B. The NS3/NS4A complex prevents phosphorylation of host IRF3, thus preventing the establishment of dsRNA induced antiviral state. The NS3/NS4A complex induces host amino acid transporter component SLC3A2, thus contributing to HCV propagation. NS3 RNA helicase binds to RNA and unwinds both dsDNA and dsRNA in the 3' to 5' direction, and likely resolves RNA complicated stable secondary structures in the template strand. Binds a single ATP and catalyzes the unzipping of a single base pair of dsRNA. Inhibits host antiviral proteins TBK1 and IRF3 thereby preventing the establishment of an antiviral state. Cleaves host MAVS/CARDIF thereby preventing the establishment of an antiviral state. Cleaves host TICAM1/TRIF, thereby disrupting TLR3 signaling and preventing the establishment of an antiviral state. Its function is as follows. Induces a specific membrane alteration that serves as a scaffold for the virus replication complex. This membrane alteration gives rise to the so-called ER-derived membranous web that contains the replication complex. NS4B self-interaction contributes to its function in membranous web formation. Promotes host TRIF protein degradation in a CASP8-dependent manner thereby inhibiting host TLR3-mediated interferon signaling. Disrupts the interaction between STING and TBK1 contributing to the inhibition of interferon signaling. Phosphorylated protein that is indispensable for viral replication and assembly. Both hypo- and hyperphosphorylated states are required for the viral life cycle. The hyperphosphorylated form of NS5A is an inhibitor of viral replication. Involved in RNA-binding and especially in binding to the viral genome. Zinc is essential for RNA-binding. Participates in the viral particle production as a result of its interaction with the mature viral core protein. Its interaction with host VAPB may target the viral replication complex to vesicles. Down-regulates viral IRES translation initiation. Mediates interferon resistance, presumably by interacting with and inhibiting host EIF2AK2/PKR. Prevents BIN1-induced apoptosis. Acts as a transcriptional activator of some host genes important for viral replication when localized in the nucleus. Via the interaction with host PACSIN2, modulates lipid droplet formation in order to promote virion assembly. Modulates TNFRSF21/DR6 signaling pathway for viral propagation. Functionally, RNA-dependent RNA polymerase that performs primer-template recognition and RNA synthesis during viral replication. Initiates RNA transcription/replication at a flavin adenine dinucleotide (FAD), resulting in a 5'- FAD cap on viral RNAs. In this way, recognition of viral 5' RNA by host pattern recognition receptors can be bypassed, thereby evading activation of antiviral pathways. The sequence is that of Genome polyprotein from Hepatitis C virus genotype 2c (isolate BEBE1) (HCV).